A 289-amino-acid chain; its full sequence is Pyridoxal kinase PdxY (289 aa).

Substrate is bound by residues serine 9 and 44 to 45 (TQ). Residues aspartate 112, alanine 144, glutamate 149, and lysine 182 each contribute to the ATP site. Residue aspartate 225 participates in substrate binding.

This sequence belongs to the pyridoxine kinase family. PdxY subfamily. In terms of assembly, homodimer. Requires Mg(2+) as cofactor.

The catalysed reaction is pyridoxal + ATP = pyridoxal 5'-phosphate + ADP + H(+). The protein operates within cofactor metabolism; pyridoxal 5'-phosphate salvage; pyridoxal 5'-phosphate from pyridoxal: step 1/1. Pyridoxal kinase involved in the salvage pathway of pyridoxal 5'-phosphate (PLP). Catalyzes the phosphorylation of pyridoxal to PLP. This is Pyridoxal kinase PdxY from Aliivibrio fischeri (strain ATCC 700601 / ES114) (Vibrio fischeri).